The primary structure comprises 244 residues: Nonsense-mediated decay protein 4 (244 aa).

It localises to the cytoplasm. Involved in nonsense-mediated decay of mRNAs containing premature stop codons. The polypeptide is Nonsense-mediated decay protein 4 (NMD4) (Candida glabrata (strain ATCC 2001 / BCRC 20586 / JCM 3761 / NBRC 0622 / NRRL Y-65 / CBS 138) (Yeast)).